Consider the following 1264-residue polypeptide: Protein fantom (1264 aa).

Coiled-coil stretches lie at residues 64 to 143 (LKQH…LQVQ), 196 to 268 (YSNS…NVET), 299 to 454 (LRIS…ESDI), and 488 to 555 (NKDL…VHLL). C2 domains follow at residues 577 to 714 (KQYK…FCTT) and 773 to 897 (AATT…SGIF). 2 disordered regions span residues 979 to 1018 (DTISHPSPETSPPPKDIKDSSPEVGPKPENGLSAVAYPSK) and 1047 to 1093 (QLAS…NTKQ). Residues 1056–1080 (SEDETEITEELEPEDEDRSASDSDD) are compositionally biased toward acidic residues.

It belongs to the RPGRIP1 family. As to quaternary structure, interacts with NPHP4 and NPHP1; NPHP1, NPHP4 and RPGRIP1L are proposed to form a functional NPHP1-4-8 module localized to cell-cell contacts and the ciliary transition zone; NPHP4 mediates the interaction between NPHP1 and RPGRIP1L. Interacts with IQCB1; the interaction likely requires additional interactors. Interacts with TBXA2R (via C-terminus), RPGR, NEK4. Interacts with NPHP4, INVS and DVL2; proposed to form a complex involved in DVL2 stabilization. Interacts with PSMD2. Ubiquitously expressed. Not found in heart and skin.

It is found in the cytoplasm. The protein localises to the cytoskeleton. Its subcellular location is the cilium basal body. It localises to the cilium axoneme. The protein resides in the microtubule organizing center. It is found in the centrosome. The protein localises to the cell junction. Its subcellular location is the tight junction. Its function is as follows. Negatively regulates signaling through the G-protein coupled thromboxane A2 receptor (TBXA2R). May be involved in mechanisms like programmed cell death, craniofacial development, patterning of the limbs, and formation of the left-right axis. Involved in the organization of apical junctions; the function is proposed to implicate a NPHP1-4-8 module. Does not seem to be strictly required for ciliogenesis. Involved in establishment of planar cell polarity such as in cochlear sensory epithelium and is proposed to implicate stabilization of disheveled proteins. Involved in regulation of proteasomal activity at the primary cilium probably implicating association with PSDM2. This chain is Protein fantom (Rpgrip1l), found in Mus musculus (Mouse).